The following is an 858-amino-acid chain: Alanine--tRNA ligase (858 aa).

Histidine 550, histidine 554, cysteine 652, and histidine 656 together coordinate Zn(2+).

The protein belongs to the class-II aminoacyl-tRNA synthetase family. Zn(2+) serves as cofactor.

It is found in the cytoplasm. The catalysed reaction is tRNA(Ala) + L-alanine + ATP = L-alanyl-tRNA(Ala) + AMP + diphosphate. Catalyzes the attachment of alanine to tRNA(Ala) in a two-step reaction: alanine is first activated by ATP to form Ala-AMP and then transferred to the acceptor end of tRNA(Ala). Also edits incorrectly charged Ser-tRNA(Ala) and Gly-tRNA(Ala) via its editing domain. In Pseudothermotoga lettingae (strain ATCC BAA-301 / DSM 14385 / NBRC 107922 / TMO) (Thermotoga lettingae), this protein is Alanine--tRNA ligase.